A 544-amino-acid polypeptide reads, in one-letter code: Chaperonin GroEL (544 aa).

Residues 29-32 (TLGP), 86-90 (DGTTT), Gly413, 476-478 (NAA), and Asp492 each bind ATP.

This sequence belongs to the chaperonin (HSP60) family. In terms of assembly, forms a cylinder of 14 subunits composed of two heptameric rings stacked back-to-back. Interacts with the co-chaperonin GroES.

The protein resides in the cytoplasm. It is found in the secreted. The catalysed reaction is ATP + H2O + a folded polypeptide = ADP + phosphate + an unfolded polypeptide.. In terms of biological role, together with its co-chaperonin GroES, plays an essential role in assisting protein folding. The GroEL-GroES system forms a nano-cage that allows encapsulation of the non-native substrate proteins and provides a physical environment optimized to promote and accelerate protein folding. The chain is Chaperonin GroEL from Bacillus subtilis (strain 168).